The chain runs to 813 residues: Probable E3 ubiquitin-protein ligase hulA (813 aa).

Residues 1 to 109 (MGSNLPAQPN…QMGGDEMLTR (109 aa)) form the C2 domain. Disordered regions lie at residues 131–235 (NLST…GWER) and 251–351 (RTTT…YFVD). The span at 148–167 (VQSSTSSGLVPQVAPSSSHP) shows a compositional bias: polar residues. The segment covering 188 to 215 (RVPSTTRPSSTAAPASAAGAAVSNSHGS) has biased composition (low complexity). The WW 1 domain occupies 227 to 260 (GRLPAGWERREDNLGRTYYVDHNTRTTTWTRPSS). The span at 251–264 (RTTTWTRPSSNYNE) shows a compositional bias: polar residues. Basic and acidic residues predominate over residues 265–292 (HAQRSQREANMQLERRAHQSRMLPEDRT). Over residues 293-307 (GANSPNLPESSQQAH) the composition is skewed to polar residues. Positions 322–331 (ATGATTAGTG) are enriched in low complexity. WW domains follow at residues 331-364 (GELP…DPRR) and 391-424 (GPLP…DPRL). One can recognise an HECT domain in the interval 480-813 (SASDLKKRLM…VEETLGFGQE (334 aa)). Cys-781 (glycyl thioester intermediate) is an active-site residue.

The protein belongs to the RSP5/NEDD4 family. As to quaternary structure, interacts with creD.

Its subcellular location is the cytoplasm. The enzyme catalyses S-ubiquitinyl-[E2 ubiquitin-conjugating enzyme]-L-cysteine + [acceptor protein]-L-lysine = [E2 ubiquitin-conjugating enzyme]-L-cysteine + N(6)-ubiquitinyl-[acceptor protein]-L-lysine.. It participates in protein modification; protein ubiquitination. Its function is as follows. E3 ubiquitin-protein ligase which accepts ubiquitin from an E2 ubiquitin-conjugating enzyme in the form of a thioester and then directly transfers the ubiquitin to targeted substrates. Probably involved in the regulatory network controlling carbon source utilization. The chain is Probable E3 ubiquitin-protein ligase hulA (hulA) from Aspergillus fumigatus (strain CBS 144.89 / FGSC A1163 / CEA10) (Neosartorya fumigata).